Reading from the N-terminus, the 179-residue chain is Shikimate kinase (179 aa).

Residue 15–20 coordinates ATP; that stretch reads GAGKTS. A Mg(2+)-binding site is contributed by Thr-19. Residues Asp-37, Arg-61, and Gly-83 each coordinate substrate. Arg-122 is an ATP binding site. Arg-142 provides a ligand contact to substrate.

It belongs to the shikimate kinase family. In terms of assembly, monomer. Mg(2+) serves as cofactor.

The protein localises to the cytoplasm. The catalysed reaction is shikimate + ATP = 3-phosphoshikimate + ADP + H(+). It functions in the pathway metabolic intermediate biosynthesis; chorismate biosynthesis; chorismate from D-erythrose 4-phosphate and phosphoenolpyruvate: step 5/7. Its function is as follows. Catalyzes the specific phosphorylation of the 3-hydroxyl group of shikimic acid using ATP as a cosubstrate. This Coxiella burnetii (strain RSA 331 / Henzerling II) protein is Shikimate kinase.